The sequence spans 141 residues: Endoribonuclease YbeY (141 aa).

3 residues coordinate Zn(2+): His-100, His-104, and His-110.

The protein belongs to the endoribonuclease YbeY family. Zn(2+) is required as a cofactor.

It is found in the cytoplasm. In terms of biological role, single strand-specific metallo-endoribonuclease involved in late-stage 70S ribosome quality control and in maturation of the 3' terminus of the 16S rRNA. The chain is Endoribonuclease YbeY from Helicobacter pylori (strain J99 / ATCC 700824) (Campylobacter pylori J99).